The following is a 270-amino-acid chain: Probable thioesterase BOA10 (270 aa).

This sequence belongs to the AMT4 thioesterase family.

Its pathway is polyketide biosynthesis. In terms of biological role, probable thioesterase; part of the gene cluster B that mediates the biosynthesis of botcinic acid and its botcinin derivatives, acetate-derived polyketides that contribute to virulence when combined with the sesquiterpene botrydial. Botcinic acid and its derivatives have been shown to induce chlorosis and necrosis during host plant infection, but also have antifungal activities. Two polyketide synthases, BOA6 and BOA9, are involved in the biosynthesis of botcinins. BOA6 mediates the formation of the per-methylated tetraketide core by condensation of four units of malonyl-CoA with one unit of acetyl-CoA, which would be methylated in activated methylene groups to yield a bicyclic acid intermediate that could then either be converted to botrylactone derivatives or lose the starter acetate unit through a retro-Claisen type C-C bond cleavage to yield botcinin derivatives. The second polyketide synthase, BOA9, is probably required for the biosynthesis of the tetraketide side chain of botcinins. The methyltransferase (MT) domain within BOA6 is probably responsible for the incorporation of four methyl groups. The trans-enoyl reductase BOA5 might take over the enoyl reductase function of BOA6 that misses an ER domain. The monooxygenases BOA2, BOA3 and BOA4 might be involved in further hydroxylations at C4, C5 and C8, whereas BOA7, close to BOA9, could potentially be involved in the hydroxylation at C4 in the side chain of botcinins. This is Probable thioesterase BOA10 from Botryotinia fuckeliana (strain B05.10) (Noble rot fungus).